The sequence spans 535 residues: Succinate-semialdehyde dehydrogenase, mitochondrial (535 aa).

Residues 1-47 (MATCIWLRSCGARRLGSTFPGCRLRPRAGGLVPASGPAPGPAQLRCY) constitute a mitochondrion transit peptide. Residue Lys126 is modified to N6-acetyllysine; alternate. Lys126 bears the N6-succinyllysine; alternate mark. N6-succinyllysine is present on residues Lys135 and Lys184. NAD(+) contacts are provided by residues Arg213 and 228 to 231 (KPAE). Arg213 serves as a coordination point for substrate. Lys265 carries the N6-acetyllysine; alternate modification. Lys265 carries the post-translational modification N6-succinyllysine; alternate. Residue 284–289 (GSTTTG) participates in NAD(+) binding. Glu306 functions as the Proton acceptor in the catalytic mechanism. Arg334 contacts substrate. The active-site Nucleophile is Cys340. Cys340 and Cys342 are joined by a disulfide. At Lys365 the chain carries N6-acetyllysine. Lys402 bears the N6-succinyllysine mark. Lys411 bears the N6-acetyllysine mark. Ser498 contacts substrate. Ser499 carries the phosphoserine modification.

The protein belongs to the aldehyde dehydrogenase family. As to quaternary structure, homotetramer.

It is found in the mitochondrion. It catalyses the reaction succinate semialdehyde + NAD(+) + H2O = succinate + NADH + 2 H(+). It functions in the pathway amino-acid degradation; 4-aminobutanoate degradation. Redox-regulated. Inhibited under oxydizing conditions. In terms of biological role, catalyzes one step in the degradation of the inhibitory neurotransmitter gamma-aminobutyric acid (GABA). This is Succinate-semialdehyde dehydrogenase, mitochondrial (ALDH5A1) from Pan troglodytes (Chimpanzee).